We begin with the raw amino-acid sequence, 618 residues long: MVAPHESQRVADSCSHLVGREIGCSRDLAGCRRCTSEGRACSYSRSGVIHRTRRRNRANQDVTRSALYSSNTTPQTISDQATGRPCEGADNTETAYDRLQQIIPSRSHQSVRVIAELLEEYTEAWQGSEAFEKLSKAPIAEFFVFSEPQTRCWLDNLNLILEKEELLIFTIPPEVYAQLASSRPQEVQDRSWLVMFYSVAIYVEHSKAQNTHRVATLSKLRRNLWLAFNDVRLLIEPSPARIQALIILATYVEEFMTPCVCWSLITKACTMLQALGIVHWRLDTATSDVRAMLFWRLNMLDKALALILCRAPAFHREMSSQIAMPTLNRLMQCRPKRTKDYPPALFEAHYLHQMHLVSCIMADVWHALYGQDTEKVQEVKERLEAWYRQAKEVIEAAALVERPLLTAKGAAAVDLGRQTLRFQYLSLVVLLTVSSRQLRSQSIGPSQEMLNLLSALGDAIPDHKGPYACLLWQYLHCPLAAFGALWGELVMKTTANPEQSLKSMEAIAHLPLYLGKLGSRHALAARLQSITARIVEQARMIVNSQEAPEALPVQDEPTNPGLPAPAAEILPIVAPNESLDPTQMQPVDDFLDDRFIMQSDPFFGTTFDWFAWGGNLEV.

The segment at residues 14-41 (CSHLVGREIGCSRDLAGCRRCTSEGRAC) is a DNA-binding region (zn(2)-C6 fungal-type). Positions 52–87 (TRRRNRANQDVTRSALYSSNTTPQTISDQATGRPCE) are disordered. A compositionally biased stretch (polar residues) spans 59–81 (NQDVTRSALYSSNTTPQTISDQA).

It is found in the nucleus. In terms of biological role, transcriptional regulator; part of the ergochrome gene cluster responsible for the typical purple-black color of the ergot sclerotia. The ergochrome gene cluster produces several ergot pigments including the yellow ergochrome secalonic acid and its derivatives, as well as the red anthraquinones endocrocin and clavorubin. This chain is Transcriptional regulator CPUR_05421, found in Claviceps purpurea (strain 20.1) (Ergot fungus).